The following is a 243-amino-acid chain: Probable transcriptional regulatory protein LCA_1307 (243 aa).

The disordered stretch occupies residues 1 to 21 (MSGHSKWHNIQGRKNAQDAKR).

The protein belongs to the TACO1 family.

The protein resides in the cytoplasm. The chain is Probable transcriptional regulatory protein LCA_1307 from Latilactobacillus sakei subsp. sakei (strain 23K) (Lactobacillus sakei subsp. sakei).